The following is a 577-amino-acid chain: Efflux pump notK' (577 aa).

N-linked (GlcNAc...) asparagine glycans are attached at residues Asn62 and Asn84. Helical transmembrane passes span 104–124 (AAIA…PVAL), 151–171 (LAVT…MLGI), 189–209 (AGIG…LGLV), 241–261 (NPTM…LMMY), and 265–285 (GAVI…TTPV). N-linked (GlcNAc...) asparagine glycosylation occurs at Asn320. 5 helical membrane-spanning segments follow: residues 328–348 (FGLA…GTLY), 373–393 (VDAI…TAFV), 413–433 (GICF…PPWA), 434–454 (TGST…EINW), and 476–496 (IADG…GVWV). Low complexity predominate over residues 555 to 566 (MPPNGSMSSGSP). Positions 555–577 (MPPNGSMSSGSPEQVAEKAVGKY) are disordered. Asn558 is a glycosylation site (N-linked (GlcNAc...) asparagine).

This sequence belongs to the nucleobase:cation symporter-2 (NCS2) (TC 2.A.40) family. Azg-like subfamily.

It localises to the cell membrane. Its function is as follows. Efflux pump; part of the gene cluster that mediates the biosynthesis of notoamide, a fungal indole alkaloid that belongs to a family of natural products containing a characteristic bicyclo[2.2.2]diazaoctane core. The protein is Efflux pump notK' of Aspergillus versicolor.